The primary structure comprises 1040 residues: Multidrug resistance protein MdtB (1040 aa).

12 helical membrane passes run 25 to 45 (LLMVAILLAGIIGYQALPVSA), 347 to 367 (LMMAIALVVMIIYLFLRNIPA), 369 to 389 (IIPGVAVPLSLIGTFAVMVFL), 396 to 416 (LTLMALTIATGFVVDDAIVVI), 440 to 460 (IGFTIISLTFSLIAVLIPLLF), 472 to 492 (FAITLAVAILISAVVSLTLTP), 537 to 557 (WLTLSVALSTLLLSVLLWVFI), 863 to 883 (LGSTVWLIVAAVVAMYIVLGI), 888 to 908 (FIHPITILSTLPTAGVGALLA), 911 to 931 (IAGSELDVIAIIGIILLIGIV), 968 to 988 (ILMTTLAALLGALPLMLSTGV), and 998 to 1018 (IGMVGGLIVSQVLTLFTTPVI).

This sequence belongs to the resistance-nodulation-cell division (RND) (TC 2.A.6) family. MdtB subfamily. Part of a tripartite efflux system composed of MdtA, MdtB and MdtC. MdtB forms a heteromultimer with MdtC.

The protein resides in the cell inner membrane. Its function is as follows. The MdtABC tripartite complex confers resistance against novobiocin and deoxycholate. The sequence is that of Multidrug resistance protein MdtB from Escherichia coli O127:H6 (strain E2348/69 / EPEC).